The following is a 449-amino-acid chain: MTDRLHIVGGGMAGSEAAWQAAQQGIDVVIHEMRPTVGTFAHQTGNLAEMVCSNSFRSDDDEQNAVGLLHWEMRAAGGLIMSAADAHRLPAGGALAVDRDPFAETVTARLHAHPRVSVTAEEVTELPRDGHWIFATGPLTSPALGAAIQAETGAEALAFFDAIAPIVYADTIDMSRAWMQSRYDKGETEEERTAYLNCPMDRDQYEAFIDALLAADKTEFHEGETATYFDGCLPIEVMAERGRETLRHGPMKPVGLTNPHQPDVKAYAVVQLRRDNALGTLYNIVGFQTKMKYGAQTAVFKTIPGLENASFARLGGIHRNTFLNSPTLLDAQMRMKSRPNIRFAGQITGVEGYVESAAMGLLAGRLAAAEIQGRALPEVPQDSAMGALIHHITGGAEAKTFQPMNVNFGLFRPVDGLKGGRRGRKDRYKAYTDRAKEAWTSWLAEAENG.

Position 9–14 (9–14 (GGGMAG)) interacts with FAD.

Belongs to the MnmG family. TrmFO subfamily. It depends on FAD as a cofactor.

The protein resides in the cytoplasm. The catalysed reaction is uridine(54) in tRNA + (6R)-5,10-methylene-5,6,7,8-tetrahydrofolate + NADH + H(+) = 5-methyluridine(54) in tRNA + (6S)-5,6,7,8-tetrahydrofolate + NAD(+). It carries out the reaction uridine(54) in tRNA + (6R)-5,10-methylene-5,6,7,8-tetrahydrofolate + NADPH + H(+) = 5-methyluridine(54) in tRNA + (6S)-5,6,7,8-tetrahydrofolate + NADP(+). Functionally, catalyzes the folate-dependent formation of 5-methyl-uridine at position 54 (M-5-U54) in all tRNAs. The sequence is that of Methylenetetrahydrofolate--tRNA-(uracil-5-)-methyltransferase TrmFO from Ruegeria pomeroyi (strain ATCC 700808 / DSM 15171 / DSS-3) (Silicibacter pomeroyi).